A 1848-amino-acid chain; its full sequence is MSPQWMPQNIQKRLLLYVLQQLSLFSEIDLPNLEEVSLNNIVLRDISIDPEKVGKLPGCNLRFGQVGTLELNTVTGGTIIGGGGGVNVDARDVEVVISPDFDINEEVRKEVQFSLAQSTADLAKTIIKDSDSAAEDESDDTDEEIVVEPKKSRSSSSSSFSGSTSKPSALSAVMSRAVEMALSRLQIKITNMKIKLVSEMTDLLFEVDEVLINTVNGTRVVKITGVRSMTLKPNVNPGELVEKVVQSPQKDDTSDNEEDDSNYEDDNNDYGDESLMDSMVFTHEEASSIYLSATSQSFPRPTSYNVDEGEVHVGNESVSSDPPAIFHMDYCDVEFDGLSNVSNLKIDIGTIKVATTPLAPTIISILNGITRSLKIKNHQKWTQQALKRQQNSRFPQYAETTDELTDDEASSKDGENTDPFFNKLHIRDIIISTTSALSRDGVFASPDNSINFVLHNSNIKQKNDMLIYGGVETFRIEQVKEGVTTDIFTFESPTAATHAEQSQSQPDSEGVSFAHGSPPPPIRPMSPSSISSMSSSGSKSSTLKADLRFEIFKKLEENVVTIETTALLSKTALLTLDLNSSLILSNFITAMNSIHSNFKVLMATIENLSKQQSPKKQKTHTNAAEAMTTKTQFILQTSPIIMSVKFTQDLLVKAIIFPISYNLQQNQLSISKILINTTIRNERESTTITISNIVLLTKLHEFKSFIKRIANPSNANPIPREVQVTASSNLFISKIMVNIALKELKFVISNIVSFYDSFASLSAKQSNSLENSVLDFVRDRSHKLEISSILQPPGQSRRRIGPGFASPHLSNPTFVNISRNNIASFRCSIKEVELNLVQVLPKFGGLTLRLKDILLYEQKNDINGSILSFDIVRVDDGQLQKFVYEFQELPLESIRLPLIMIHCKNTEKISTVDVVIRNVLVEYYTQWLLLLDDFEANEEKLAELVVEKVKPVNPSSSQNRFDIRFSVFDCIIGLNPGRLPCKSYLVVGRGTSDFTFGVNQFYIKSSFRDVSALLIDDVKNKEKMPLKDNSTSRSRKSLPTSSYTSPLTFFSNLGYIMIGGLNVVHIGITFNTNIEEVMKRNEKLGISDNLSLIDLKINSDEHHLELCADSTHVLLQLINDLKLPLNFKDDEKMKVTVDSSINLMDDLDENQFQLKKRNISVAPGVETSSSSAGSENENLETIAFDEDHFSKARNKIPKGSKVDPFKLNINLSKTKIYLYDGYDWKDTRKAVRGAVKRVEAQAMKERLKKLKKQTDKDDYDEEDEFIEETLFSSIHVGIPRDATDANLTDRINKRVQSSLQETDMTPEEAQKAQINVELGKNYKNLKLRRSRVHKIMADFTNIEVNVSVYSTRDPRKDPTDENLPYELLNDVEVRLGTADVYDNVATSTWNKLLTYMNTSGEGEIGKSMLKLAITNVRPSPKLVSSEAIMKVQVLPVRLHIDQDTLDFLMRFLEFKDSRFSLPLDEIVYIQKFQISPVMLKLDYKPKRVDYVGIRSGNSAEFMNFFILDGSTINLAEATVYGLLGMPSLGKALGEVWGPQIQQTQIAGILAGLAPIRSIVNIGGGVKDLIAIPISEYKKDGRLFRSIQKGTQKFAKTTGYEILNLGVKLASGTQVILEQGEQLLGGEGSGARLPASRGSNSQKCNVNKRSSYKVAAKVDFNKLLANSQVLNQSVRVDRDQYANKKFYSYIDIDEDDDELVTGIDKELLSKSIFLLPRDDNSKKEGEEDEADDSSADEEGEKLISLYSNQPENIQEGMKLAYKSFGNNLKITKRQLINLKNELNESENIQDSLKSILKSSPIIFIRPIIGSTEALSKALMGLGNEIDSKRIVESRDKYRYIKRAKDEDVL.

Disordered stretches follow at residues 129 to 168 (DSDS…SKPS), 237 to 274 (PGEL…GDES), 386 to 417 (LKRQ…GENT), 494 to 540 (TAAT…GSKS), and 1717 to 1737 (DDNS…ADEE). Over residues 132 to 146 (SAAEDESDDTDEEIV) the composition is skewed to acidic residues. The segment covering 154 to 168 (SSSSSSFSGSTSKPS) has biased composition (low complexity). Residues 254 to 274 (SDNEEDDSNYEDDNNDYGDES) are compositionally biased toward acidic residues. Over residues 494-507 (TAATHAEQSQSQPD) the composition is skewed to polar residues. Residues 525 to 540 (MSPSSISSMSSSGSKS) are compositionally biased toward low complexity. Residues 1725–1737 (EEDEADDSSADEE) show a composition bias toward acidic residues.

It belongs to the ATG2 family.

It localises to the preautophagosomal structure membrane. It is found in the endoplasmic reticulum membrane. The enzyme catalyses a 1,2-diacyl-sn-glycero-3-phosphocholine(in) = a 1,2-diacyl-sn-glycero-3-phosphocholine(out). It catalyses the reaction a 1,2-diacyl-sn-glycero-3-phospho-L-serine(in) = a 1,2-diacyl-sn-glycero-3-phospho-L-serine(out). It carries out the reaction a 1,2-diacyl-sn-glycero-3-phosphoethanolamine(in) = a 1,2-diacyl-sn-glycero-3-phosphoethanolamine(out). Functionally, lipid transfer protein required for autophagosome completion and peroxisome degradation. Tethers the edge of the isolation membrane (IM) to the endoplasmic reticulum (ER) and mediates direct lipid transfer from ER to IM for IM expansion. ATG2 binds to the ER exit site (ERES), which is the membrane source for autophagosome formation, using basic residues in its N-terminal region (NR) and to the expanding edge of the IM through its C-terminal region. The latter binding is assisted by an ATG18-PtdIns3P interaction. ATG2 then extracts phospholipids from the membrane source using its NR and transfers them to ATG9 to the IM through its predicted beta-sheet-rich structure for membrane expansion. In Scheffersomyces stipitis (strain ATCC 58785 / CBS 6054 / NBRC 10063 / NRRL Y-11545) (Yeast), this protein is Autophagy-related protein 2 (ATG2).